Here is a 1481-residue protein sequence, read N- to C-terminus: Structural protein ORF147 (1481 aa).

2 disordered regions span residues 65–88 (AEKRAEITKGSQKKSNSSSSENLE) and 1319–1403 (DEKL…PPIP). 3 stretches are compositionally biased toward low complexity: residues 73–84 (KGSQKKSNSSSS), 1323–1336 (SSTVSSSSSSSPKT), and 1393–1403 (SSRTTITPPIP).

The protein resides in the virion. The polypeptide is Structural protein ORF147 (Noctuidae (owlet moths)).